A 307-amino-acid chain; its full sequence is UDP-3-O-acyl-N-acetylglucosamine deacetylase (307 aa).

Positions 79, 239, and 243 each coordinate Zn(2+). Histidine 266 functions as the Proton donor in the catalytic mechanism.

Belongs to the LpxC family. Zn(2+) is required as a cofactor.

The catalysed reaction is a UDP-3-O-[(3R)-3-hydroxyacyl]-N-acetyl-alpha-D-glucosamine + H2O = a UDP-3-O-[(3R)-3-hydroxyacyl]-alpha-D-glucosamine + acetate. Its pathway is glycolipid biosynthesis; lipid IV(A) biosynthesis; lipid IV(A) from (3R)-3-hydroxytetradecanoyl-[acyl-carrier-protein] and UDP-N-acetyl-alpha-D-glucosamine: step 2/6. In terms of biological role, catalyzes the hydrolysis of UDP-3-O-myristoyl-N-acetylglucosamine to form UDP-3-O-myristoylglucosamine and acetate, the committed step in lipid A biosynthesis. This chain is UDP-3-O-acyl-N-acetylglucosamine deacetylase, found in Tolumonas auensis (strain DSM 9187 / NBRC 110442 / TA 4).